The primary structure comprises 655 residues: Fructose-1,6-bisphosphatase class 3 (655 aa).

Belongs to the FBPase class 3 family. It depends on Mn(2+) as a cofactor.

The catalysed reaction is beta-D-fructose 1,6-bisphosphate + H2O = beta-D-fructose 6-phosphate + phosphate. The protein operates within carbohydrate biosynthesis; gluconeogenesis. The chain is Fructose-1,6-bisphosphatase class 3 from Porphyromonas gingivalis (strain ATCC 33277 / DSM 20709 / CIP 103683 / JCM 12257 / NCTC 11834 / 2561).